Here is a 607-residue protein sequence, read N- to C-terminus: Albumin B (607 aa).

The first 18 residues, 1–18 (MKWITLICLLISSSFIES), serve as a signal peptide directing secretion. The propeptide occupies 19–24 (RILFKR). 3 Albumin domains span residues 22–209 (FKRD…KQLM), 210–402 (KQSH…RFMN), and 403–600 (EAKE…VLIE). Position 30 (histidine 30) interacts with Cu cation. 17 disulfide bridges follow: cysteine 80/cysteine 88, cysteine 101/cysteine 117, cysteine 116/cysteine 127, cysteine 147/cysteine 192, cysteine 191/cysteine 200, cysteine 223/cysteine 269, cysteine 268/cysteine 276, cysteine 288/cysteine 302, cysteine 301/cysteine 312, cysteine 339/cysteine 384, cysteine 383/cysteine 392, cysteine 415/cysteine 461, cysteine 460/cysteine 471, cysteine 484/cysteine 500, cysteine 499/cysteine 510, cysteine 537/cysteine 582, and cysteine 581/cysteine 590.

The protein belongs to the ALB/AFP/VDB family. As to expression, plasma.

It localises to the secreted. Its function is as follows. Serum albumin, the main protein of plasma, has a good binding capacity for water, Ca(2+), Na(+), K(+), fatty acids, hormones, bilirubin and drugs. Its main function is the regulation of the colloidal osmotic pressure of blood. This chain is Albumin B (alb-b), found in Xenopus laevis (African clawed frog).